Consider the following 107-residue polypeptide: CYFQNCPRGXXXAMSDLELRQCLPCGPGGKGRCFGPSICCGDELGCFMGTAEALRCQEENYLPSPCQSGQKPCGSGGRCAAAGICCNDESCVTEPECREGASFPRRA.

Cysteine 1 and cysteine 6 are disulfide-bonded. Glycine 9 carries the post-translational modification Glycine amide. Disulfide bonds link cysteine 22–cysteine 66, cysteine 25–cysteine 39, cysteine 33–cysteine 56, cysteine 40–cysteine 46, cysteine 73–cysteine 85, cysteine 79–cysteine 97, and cysteine 86–cysteine 91.

The protein belongs to the vasopressin/oxytocin family. As to quaternary structure, interacts with vasopressin receptors V1bR/AVPR1B (Ki=85 pM), V1aR/AVPR1A (Ki=0.6 nM) and V2R/AVPR2 (Ki=4.9 nM). Interacts with oxytocin receptor (OXTR) (Ki=110 nM).

It is found in the secreted. Its function is as follows. Neurophysin 2 specifically binds vasopressin. Functionally, vasopressin has a direct antidiuretic action on the kidney, it also causes vasoconstriction of the peripheral vessels. Acts by binding to vasopressin receptors (V1bR/AVPR1B, V1aR/AVPR1A, and V2R/AVPR2). This Balaenoptera physalus (Fin whale) protein is Vasopressin-neurophysin 2 (AVP).